A 62-amino-acid chain; its full sequence is Large ribosomal subunit protein bL28 (62 aa).

It belongs to the bacterial ribosomal protein bL28 family.

In Parafrankia sp. (strain EAN1pec), this protein is Large ribosomal subunit protein bL28.